The primary structure comprises 388 residues: Flap endonuclease 1 (388 aa).

Residues 1-104 (MGILGLSKLI…GELAKRAERR (104 aa)) are N-domain. Position 34 (aspartate 34) interacts with Mg(2+). DNA contacts are provided by arginine 47 and arginine 70. Mg(2+) contacts are provided by aspartate 86, glutamate 158, glutamate 160, aspartate 179, and aspartate 181. The I-domain stretch occupies residues 122-253 (EIEKFNRRLV…KRAIELINNY (132 aa)). Position 158 (glutamate 158) interacts with DNA. Residues glycine 231 and aspartate 233 each coordinate DNA. Aspartate 233 serves as a coordination point for Mg(2+). The segment at 336–344 (TQVRLDSFF) is interaction with PCNA. Residues 343-388 (FFKTLPSTPSATNAAKRKAEEAKKSANNKKAKTSGGGGGGRGRRPK) are disordered.

Belongs to the XPG/RAD2 endonuclease family. FEN1 subfamily. Interacts with PCNA. Three molecules of FEN1 bind to one PCNA trimer with each molecule binding to one PCNA monomer. PCNA stimulates the nuclease activity without altering cleavage specificity. It depends on Mg(2+) as a cofactor. Phosphorylated. Phosphorylation upon DNA damage induces relocalization to the nuclear plasma.

The protein resides in the nucleus. The protein localises to the nucleolus. It localises to the nucleoplasm. Its subcellular location is the mitochondrion. Functionally, structure-specific nuclease with 5'-flap endonuclease and 5'-3' exonuclease activities involved in DNA replication and repair. During DNA replication, cleaves the 5'-overhanging flap structure that is generated by displacement synthesis when DNA polymerase encounters the 5'-end of a downstream Okazaki fragment. It enters the flap from the 5'-end and then tracks to cleave the flap base, leaving a nick for ligation. Also involved in the long patch base excision repair (LP-BER) pathway, by cleaving within the apurinic/apyrimidinic (AP) site-terminated flap. Acts as a genome stabilization factor that prevents flaps from equilibrating into structures that lead to duplications and deletions. Also possesses 5'-3' exonuclease activity on nicked or gapped double-stranded DNA, and exhibits RNase H activity. Also involved in replication and repair of rDNA and in repairing mitochondrial DNA. This Drosophila ananassae (Fruit fly) protein is Flap endonuclease 1.